Reading from the N-terminus, the 629-residue chain is tRNA uridine 5-carboxymethylaminomethyl modification enzyme MnmG (629 aa).

Residues 13-18 (GGGHAG), Val-125, and Ser-180 each bind FAD. An NAD(+)-binding site is contributed by 273 to 287 (GPRYCPSIEDKVMRF). Gln-370 provides a ligand contact to FAD.

It belongs to the MnmG family. As to quaternary structure, homodimer. Heterotetramer of two MnmE and two MnmG subunits. The cofactor is FAD.

The protein localises to the cytoplasm. In terms of biological role, NAD-binding protein involved in the addition of a carboxymethylaminomethyl (cmnm) group at the wobble position (U34) of certain tRNAs, forming tRNA-cmnm(5)s(2)U34. The sequence is that of tRNA uridine 5-carboxymethylaminomethyl modification enzyme MnmG from Shigella flexneri serotype 5b (strain 8401).